Reading from the N-terminus, the 797-residue chain is Glycoprotein gp2 (797 aa).

A signal peptide spans 1-25 (MGFIYARKLLLCMAVSIYAIGSTTT). Disordered regions lie at residues 24 to 188 (TTTE…TTAA) and 212 to 549 (AATT…EIVP). The segment covering 212–373 (AATTTAATTT…PDSSTGSTST (162 aa)) has biased composition (low complexity). Polar residues predominate over residues 374–394 (AEPSSTFTLTPSTATPSTDQF). 2 stretches are compositionally biased toward low complexity: residues 395-430 (TGSS…EAST) and 445-457 (TPDG…NTTP). A compositionally biased stretch (polar residues) spans 466-492 (FADTQQTPDNGVSTQHTTINDHTTANA). Residues 495–505 (HAGHHRGRAGG) are compositionally biased toward basic residues. Residue Asn-590 is glycosylated (N-linked (GlcNAc...) asparagine; by host). A helical membrane pass occupies residues 766 to 790 (FALVAATTLTVTILCLLCCLYCMLT).

It is found in the virion membrane. Functionally, virulence factor. The chain is Glycoprotein gp2 (EUs4) from Equine herpesvirus 1 (strain Ab4p) (EHV-1).